We begin with the raw amino-acid sequence, 161 residues long: GTP-dependent dephospho-CoA kinase (161 aa).

GTP-binding residues include D37, I38, D56, K58, E112, and D135.

The protein belongs to the GTP-dependent DPCK family.

The catalysed reaction is 3'-dephospho-CoA + GTP = GDP + CoA + H(+). It functions in the pathway cofactor biosynthesis; coenzyme A biosynthesis. Catalyzes the GTP-dependent phosphorylation of the 3'-hydroxyl group of dephosphocoenzyme A to form coenzyme A (CoA). This is GTP-dependent dephospho-CoA kinase from Methanococcus aeolicus (strain ATCC BAA-1280 / DSM 17508 / OCM 812 / Nankai-3).